A 121-amino-acid polypeptide reads, in one-letter code: Large ribosomal subunit protein uL22 (121 aa).

The protein belongs to the universal ribosomal protein uL22 family. In terms of assembly, part of the 50S ribosomal subunit.

In terms of biological role, this protein binds specifically to 23S rRNA; its binding is stimulated by other ribosomal proteins, e.g. L4, L17, and L20. It is important during the early stages of 50S assembly. It makes multiple contacts with different domains of the 23S rRNA in the assembled 50S subunit and ribosome. Its function is as follows. The globular domain of the protein is located near the polypeptide exit tunnel on the outside of the subunit, while an extended beta-hairpin is found that lines the wall of the exit tunnel in the center of the 70S ribosome. This Kocuria rhizophila (strain ATCC 9341 / DSM 348 / NBRC 103217 / DC2201) protein is Large ribosomal subunit protein uL22.